The sequence spans 167 residues: Small ribosomal subunit protein mS25 (167 aa).

This sequence belongs to the mitochondrion-specific ribosomal protein mS25 family. In terms of assembly, component of the mitochondrial ribosome small subunit (28S) which comprises a 12S rRNA and about 30 distinct proteins.

The protein localises to the mitochondrion. The polypeptide is Small ribosomal subunit protein mS25 (mRpS25) (Drosophila melanogaster (Fruit fly)).